Here is a 91-residue protein sequence, read N- to C-terminus: uncharacterized protein (91 aa).

The next 2 membrane-spanning stretches (helical) occupy residues 10–30 (VLFTAPGLIVGALAIGAAGGI) and 46–66 (LLVAVLFVGAFTGIMVEQALS). Residues 68–91 (MRRQDGARGTARAGRNSARRRMPS) form a disordered region.

It localises to the cell membrane. This is an uncharacterized protein from Sinorhizobium fredii (strain NBRC 101917 / NGR234).